The sequence spans 360 residues: MLVYLAEYLTRFHTGFNVFSYVTFRAILGLLTALMFSLWWGPKLIERLQLMQIGQVVRNDGPESHFSKRGTPTMGGLMILGAIFISVLLWGDLGSRYVWVMLFVLGSFGMIGFIDDYRKVVRKDTKGLIARWKYILQSLAALIIAFFLYTTASNPGETQLVVPFFKDVMPQLGAVFIVLAYFTIVGSSNAVNLTDGLDGLAIMPTVMVAAAFALIAYLSGHAQFANYLHIPHLPGSGELVIVCTAIVGAGLGFLWFNTYPAQVFMGDVGSLSLGAALGAIAVLVRQEILLVIMGGVFVMETVSVILQVGSYKLRGQRIFRMAPIHHHYELKGWPEPRVIVRFWIISIFLVLLGLATLKLR.

10 helical membrane-spanning segments follow: residues 26–46 (AILGLLTALMFSLWWGPKLIE), 74–94 (MGGLMILGAIFISVLLWGDLG), 97–117 (YVWVMLFVLGSFGMIGFIDDY), 132–152 (WKYILQSLAALIIAFFLYTTA), 168–188 (VMPQLGAVFIVLAYFTIVGSS), 199–219 (GLAIMPTVMVAAAFALIAYLS), 236–256 (SGELVIVCTAIVGAGLGFLWF), 263–283 (VFMGDVGSLSLGAALGAIAVL), 288–308 (ILLVIMGGVFVMETVSVILQV), and 338–358 (VIVRFWIISIFLVLLGLATLK).

The protein belongs to the glycosyltransferase 4 family. MraY subfamily. The cofactor is Mg(2+).

It localises to the cell inner membrane. The catalysed reaction is UDP-N-acetyl-alpha-D-muramoyl-L-alanyl-gamma-D-glutamyl-meso-2,6-diaminopimeloyl-D-alanyl-D-alanine + di-trans,octa-cis-undecaprenyl phosphate = di-trans,octa-cis-undecaprenyl diphospho-N-acetyl-alpha-D-muramoyl-L-alanyl-D-glutamyl-meso-2,6-diaminopimeloyl-D-alanyl-D-alanine + UMP. It participates in cell wall biogenesis; peptidoglycan biosynthesis. Its function is as follows. Catalyzes the initial step of the lipid cycle reactions in the biosynthesis of the cell wall peptidoglycan: transfers peptidoglycan precursor phospho-MurNAc-pentapeptide from UDP-MurNAc-pentapeptide onto the lipid carrier undecaprenyl phosphate, yielding undecaprenyl-pyrophosphoryl-MurNAc-pentapeptide, known as lipid I. This is Phospho-N-acetylmuramoyl-pentapeptide-transferase from Shewanella sp. (strain ANA-3).